Here is a 507-residue protein sequence, read N- to C-terminus: Proton-coupled zinc antiporter SLC30A1 (507 aa).

The Cytoplasmic portion of the chain corresponds to 1–10; sequence MGCWGRNRGR. The chain crosses the membrane as a helical span at residues 11–31; that stretch reads LLCMLLLTFMFMVLEVVVSRV. Over 32 to 35 the chain is Extracellular; the sequence is TASL. A helical transmembrane segment spans residues 36–56; sequence AMLSDSFHMLSDVLALVVALV. Zn(2+) is bound by residues H43 and D47. Residues 57 to 78 are Cytoplasmic-facing; the sequence is AERFARRTHATQKNTFGWIRAE. Residues 79 to 99 form a helical membrane-spanning segment; that stretch reads VMGALVNAIFLTGLCFAILLE. At 100–113 the chain is on the extracellular side; the sequence is AVERFIEPHEMQQP. Residues 114–134 traverse the membrane as a helical segment; sequence LVVLSVGVAGLLVNVLGLCLF. The Cytoplasmic segment spans residues 135 to 247; that stretch reads HHHSGEGQGA…RAGQLNMRGV (113 aa). The interval 140-218 is disordered; sequence EGQGAGHGHS…EKLRSDDPVD (79 aa). Residues 145-156 are 6 X 2 AA approximate repeats of H-G; that stretch reads GHGHSHGHGHGH. Basic residues predominate over residues 147 to 165; that stretch reads GHSHGHGHGHLAKGARKAG. Residues 188-200 show a composition bias toward polar residues; that stretch reads TNTLVANTSNSNG. Residues 204-215 are compositionally biased toward basic and acidic residues; it reads DQAEPEKLRSDD. A helical transmembrane segment spans residues 248-268; sequence FLHVLGDALGSVIVVVNALVF. Zn(2+) contacts are provided by H250 and D254. At 269–307 the chain is on the extracellular side; it reads YFSWKGCTEDDFCVNPCFPDPCKSSVELMNSTQAPMHEA. N-linked (GlcNAc...) asparagine glycosylation is present at N298. The helical transmembrane segment at 308-328 threads the bilayer; that stretch reads GPCWVLYLDPTLCIIMVCILL. The Cytoplasmic segment spans residues 329–507; sequence YTTYPLLKES…VPNKQPESSL (179 aa). Residue S506 is modified to Phosphoserine.

The protein belongs to the cation diffusion facilitator (CDF) transporter (TC 2.A.4) family. SLC30A subfamily. In terms of assembly, homodimer. Interacts with TMEM163. Interacts and forms a complex with TMC6 and TMC8; the interaction regulates zinc transport into the ER. In terms of tissue distribution, widely expressed. Detected in duodenum and jejunum but not in ileum and colon (at protein level). Expressed by neuroglial cells (at protein level).

The protein localises to the cell membrane. The protein resides in the basolateral cell membrane. It localises to the cytoplasmic vesicle membrane. It is found in the cytoplasm. Its subcellular location is the endoplasmic reticulum membrane. The protein localises to the golgi apparatus membrane. The protein resides in the nucleus membrane. The enzyme catalyses Zn(2+)(in) + 2 H(+)(out) = Zn(2+)(out) + 2 H(+)(in). Calcium-dependent. In terms of biological role, zinc ion:proton antiporter that could function at the plasma membrane mediating zinc efflux from cells against its electrochemical gradient protecting them from intracellular zinc accumulation and toxicity. Alternatively, could prevent the transport to the plasma membrane of CACNB2, the L-type calcium channels regulatory subunit, through a yet to be defined mechanism. By modulating the expression of these channels at the plasma membrane, could prevent calcium and zinc influx into cells. By the same mechanism, could also prevent L-type calcium channels-mediated heavy metal influx into cells. In some cells, could also function as a zinc ion:proton antiporter mediating zinc entry into the lumen of cytoplasmic vesicles. In macrophages, can increase zinc ions concentration into the lumen of cytoplasmic vesicles containing engulfed bacteria and could help inactivate them. Forms a complex with TMC6/EVER1 and TMC8/EVER2 at the ER membrane of keratynocytes which facilitates zinc uptake into the ER. Down-regulates the activity of transcription factors induced by zinc and cytokines. The chain is Proton-coupled zinc antiporter SLC30A1 from Rattus norvegicus (Rat).